The chain runs to 162 residues: Disulfide bond formation protein B (162 aa).

The Cytoplasmic portion of the chain corresponds to Met-1–Gly-10. Residues Leu-11 to Gly-27 form a helical membrane-spanning segment. Residues Leu-28–Gly-45 are Periplasmic-facing. Cys-37 and Cys-40 are oxidised to a cystine. A helical membrane pass occupies residues Val-46–Pro-62. The Cytoplasmic portion of the chain corresponds to Arg-63–Trp-68. A helical membrane pass occupies residues Pro-69–Leu-86. Residues Arg-87–Gly-140 are Periplasmic-facing. Cys-100 and Cys-127 are disulfide-bonded. A helical membrane pass occupies residues Trp-141–Ala-159. Residues Arg-160–Ala-162 are Cytoplasmic-facing.

The protein belongs to the DsbB family.

Its subcellular location is the cell inner membrane. In terms of biological role, required for disulfide bond formation in some periplasmic proteins. Acts by oxidizing the DsbA protein. The protein is Disulfide bond formation protein B of Alkalilimnicola ehrlichii (strain ATCC BAA-1101 / DSM 17681 / MLHE-1).